A 216-amino-acid polypeptide reads, in one-letter code: Adenylate kinase (216 aa).

ATP is bound at residue 10–15 (GAGKGT). Positions 30–59 (STGDMLRAAVNAGTEVGKRAKAVMDAGKLV) are NMP. AMP contacts are provided by residues Thr-31, Arg-36, 57 to 59 (KLV), 85 to 88 (GFPR), and Gln-92. The interval 126–163 (GRYTCAQCGTVYHDTDKVPVEEGVCDKCGSTHFKRRPD) is LID. Arg-127 provides a ligand contact to ATP. Residues Cys-130 and Cys-133 each contribute to the Zn(2+) site. 136-137 (VY) serves as a coordination point for ATP. Residues Cys-150 and Cys-153 each coordinate Zn(2+). Residues Arg-160 and Arg-172 each contribute to the AMP site. Residue Ala-200 coordinates ATP.

Belongs to the adenylate kinase family. As to quaternary structure, monomer.

The protein resides in the cytoplasm. It catalyses the reaction AMP + ATP = 2 ADP. Its pathway is purine metabolism; AMP biosynthesis via salvage pathway; AMP from ADP: step 1/1. In terms of biological role, catalyzes the reversible transfer of the terminal phosphate group between ATP and AMP. Plays an important role in cellular energy homeostasis and in adenine nucleotide metabolism. The chain is Adenylate kinase from Rhizobium etli (strain ATCC 51251 / DSM 11541 / JCM 21823 / NBRC 15573 / CFN 42).